We begin with the raw amino-acid sequence, 627 residues long: Chaperone protein DnaK (627 aa).

Phosphothreonine; by autocatalysis is present on threonine 197. The span at 602 to 611 shows a compositional bias: polar residues; the sequence is ENQHSEANTV. Residues 602–627 are disordered; that stretch reads ENQHSEANTVNDEKVVDADFQDVDKK. Basic and acidic residues predominate over residues 612–627; the sequence is NDEKVVDADFQDVDKK.

Belongs to the heat shock protein 70 family.

Its function is as follows. Acts as a chaperone. The polypeptide is Chaperone protein DnaK (Rickettsia felis (strain ATCC VR-1525 / URRWXCal2) (Rickettsia azadi)).